A 156-amino-acid polypeptide reads, in one-letter code: Small ribosomal subunit protein uS7 (156 aa).

This sequence belongs to the universal ribosomal protein uS7 family. In terms of assembly, part of the 30S ribosomal subunit. Contacts proteins S9 and S11.

Its function is as follows. One of the primary rRNA binding proteins, it binds directly to 16S rRNA where it nucleates assembly of the head domain of the 30S subunit. Is located at the subunit interface close to the decoding center, probably blocks exit of the E-site tRNA. The protein is Small ribosomal subunit protein uS7 of Lacticaseibacillus casei (strain BL23) (Lactobacillus casei).